The primary structure comprises 171 residues: Small ribosomal subunit protein uS5 (171 aa).

The S5 DRBM domain occupies 14-77 (LKEKLVMVNR…EKAKKKLLKI (64 aa)).

Belongs to the universal ribosomal protein uS5 family. Part of the 30S ribosomal subunit. Contacts proteins S4 and S8.

In terms of biological role, with S4 and S12 plays an important role in translational accuracy. Located at the back of the 30S subunit body where it stabilizes the conformation of the head with respect to the body. In Karelsulcia muelleri (strain GWSS) (Sulcia muelleri), this protein is Small ribosomal subunit protein uS5.